Reading from the N-terminus, the 409-residue chain is Autophagy-related protein 21 (409 aa).

4 WD repeats span residues 1-35 (MKVL…KCFE), 221-261 (VHKG…TLQS), 273-312 (TRPC…QQNK), and 361-402 (KVDD…GECI). Residues 269–273 (FRRGT) carry the L/FRRG motif motif.

This sequence belongs to the WD repeat PROPPIN family.

Its subcellular location is the cytoplasm. The protein localises to the membrane. It localises to the vacuole membrane. Functionally, required for cytoplasm to vacuole transport (Cvt) vesicles formation and mitophagy. Involved in binding of phosphatidylethanolamine to ATG8 and in recruitment of ATG8 and ATG5 to the pre-autophagosomal structure. Protects ATG8 from ARG4-mediated cleavage. The chain is Autophagy-related protein 21 (ATG21) from Eremothecium gossypii (strain ATCC 10895 / CBS 109.51 / FGSC 9923 / NRRL Y-1056) (Yeast).